Reading from the N-terminus, the 103-residue chain is DPVAPTVLIFPPAADQVATGTVTIVCVANKYFPDVTVTWEVDGTTQTTGIENSKTPQNSADCTYNLSSTLTLTSTQYNSHKEYTCKVTQGTTSVVQSFNRGDC.

Positions 5–95 (PTVLIFPPAA…KVTQGTTSVV (91 aa)) constitute an Ig-like domain. The cysteines at positions 26 and 85 are disulfide-linked.

This is Ig kappa-b4 chain C region from Oryctolagus cuniculus (Rabbit).